Consider the following 356-residue polypeptide: Mannonate dehydratase 2 (356 aa).

Belongs to the mannonate dehydratase family. Requires Fe(2+) as cofactor. Mn(2+) serves as cofactor.

The enzyme catalyses D-mannonate = 2-dehydro-3-deoxy-D-gluconate + H2O. Its pathway is carbohydrate metabolism; pentose and glucuronate interconversion. Catalyzes the dehydration of D-mannonate. The protein is Mannonate dehydratase 2 of Bacillus licheniformis (strain ATCC 14580 / DSM 13 / JCM 2505 / CCUG 7422 / NBRC 12200 / NCIMB 9375 / NCTC 10341 / NRRL NRS-1264 / Gibson 46).